The following is a 313-amino-acid chain: NF-kappa-B inhibitor delta (313 aa).

ANK repeat units lie at residues 48 to 83 (EGDTLLHLFAARGLRWAAYAAAEVLQVYRRLDIREH), 84 to 113 (KGKTPLLVAAAANQPLIVEDLLNLGAEPNA), 117 to 146 (QGRSVLHVAATYGLPGVLLAVLNSGVQVDL), 152 to 201 (EGLT…NHTS), 206 to 236 (SNKTVLHLAVQAANPTLVQLLLELPRGDLRT), and 243 to 276 (HGNTALHMAAALPPGPAQEAIVRHLLAAGADPTL).

Belongs to the NF-kappa-B inhibitor family. In terms of assembly, interacts with NFKB1, RELA and RELB; in the nucleus.

Its subcellular location is the nucleus. Functionally, regulates the expression of IL-2, IL-6, and other cytokines through regulation on NF-kappa-B activity. Functions in the regulation of inflammatory responses. Involved in the induction of T helper 17 cells (Th17) differentiation upon recognition of antigen by T cell antigen receptor (TCR). May also regulate TCR-induced negative selection of thymocytes. In Homo sapiens (Human), this protein is NF-kappa-B inhibitor delta (NFKBID).